A 360-amino-acid polypeptide reads, in one-letter code: MSQERPTFYRQELNKTIWEVPERYQNLSPVGSGAYGSVCAAFDTKTGLRVAVKKLSRPFQSIIHAKRTYRELRLLKHMKHENVIGLLDVFTPARSLEEFNDVYLVTHLMGADLNNIVKCQKLTDDHVQFLIYQILRGLKYIHSADIIHRDLKPSNLAVNEDCELKILDFGLARHTDDEMTGYVATRWYRAPEIMLNWMHYNQTVDIWSVGCIMAELLTGRTLFPGTDHINQLQQIMRLTGTPPAYLINRMPSHEARNYIQSLTQMPKMNFANVFIGANPLAVDLLEKMLVLDSDKRITAAQALAHAYFAQYHDPDDEPVADPYDQSFESRDLLIDEWKSLTYDEVISFVPPPLDQEEMES.

Ser2 carries the post-translational modification N-acetylserine. Ser2 is subject to Phosphoserine. Thr16 is subject to Phosphothreonine. Residues 24–308 (YQNLSPVGSG…AAQALAHAYF (285 aa)) form the Protein kinase domain. ATP-binding positions include 30-38 (VGSGAYGSV) and Lys53. At Lys53 the chain carries N6-acetyllysine. Asp150 serves as the catalytic Proton acceptor. The residue at position 152 (Lys152) is an N6-acetyllysine. Thr180 carries the phosphothreonine; by MAP2K3, MAP2K4, MAP2K6 and autocatalysis modification. At Tyr182 the chain carries Phosphotyrosine; by MAP2K3, MAP2K4, MAP2K6 and autocatalysis. Thr263 is subject to Phosphothreonine. Tyr323 carries the post-translational modification Phosphotyrosine; by ZAP70.

Belongs to the protein kinase superfamily. CMGC Ser/Thr protein kinase family. MAP kinase subfamily. In terms of assembly, component of a signaling complex containing at least AKAP13, PKN1, MAPK14, ZAK and MAP2K3. Within this complex, AKAP13 interacts directly with PKN1, which in turn recruits MAPK14, MAP2K3 and ZAK. Binds to a kinase interaction motif within the protein tyrosine phosphatase, PTPRR. This interaction retains MAPK14 in the cytoplasm and prevents nuclear accumulation. Interacts with SPAG9 and GADD45A. Interacts with CDC25B, CDC25C, DUSP1, DUSP10, DUSP16, NP60, SUPT20H and TAB1. Interacts with casein kinase II subunits CSNK2A1 and CSNK2B. Interacts with PPM1D. Interacts with CDK5RAP3; recruits PPM1D to MAPK14 and may regulate its dephosphorylation. Interacts with DUSP2; this interaction does not lead to catalytic activation of DUSP2 and dephosphrylation of MAPK14. Mg(2+) is required as a cofactor. In terms of processing, dually phosphorylated on Thr-180 and Tyr-182 by the MAP2Ks MAP2K3/MKK3, MAP2K4/MKK4 and MAP2K6/MKK6 in response to inflammatory cytokines, environmental stress or growth factors, which activates the enzyme. Dual phosphorylation can also be mediated by TAB1-mediated autophosphorylation. TCR engagement in T-cells also leads to Tyr-323 phosphorylation by ZAP70. Dephosphorylated and inactivated by DUPS1, DUSP10 and DUSP16. PPM1D also mediates dephosphorylation and inactivation of MAPK14. Acetylated at Lys-53 and Lys-152 by KAT2B and EP300. Acetylation at Lys-53 increases the affinity for ATP and enhances kinase activity. Lys-53 and Lys-152 are deacetylated by HDAC3. Post-translationally, ubiquitinated. Ubiquitination leads to degradation by the proteasome pathway.

It localises to the cytoplasm. It is found in the nucleus. The catalysed reaction is L-seryl-[protein] + ATP = O-phospho-L-seryl-[protein] + ADP + H(+). It carries out the reaction L-threonyl-[protein] + ATP = O-phospho-L-threonyl-[protein] + ADP + H(+). Activated by cell stresses such as DNA damage, heat shock, osmotic shock, anisomycin and sodium arsenite, as well as pro-inflammatory stimuli such as bacterial lipopolysaccharide (LPS) and interleukin-1. Activation occurs through dual phosphorylation of Thr-180 and Tyr-182 by either of two dual specificity kinases, MAP2K3/MKK3 or MAP2K6/MKK6, and potentially also MAP2K4/MKK4, as well as by TAB1-mediated autophosphorylation. MAPK14 phosphorylated on both Thr-180 and Tyr-182 is 10-20-fold more active than MAPK14 phosphorylated only on Thr-180, whereas MAPK14 phosphorylated on Tyr-182 alone is inactive. whereas Thr-180 is necessary for catalysis, Tyr-182 may be required for auto-activation and substrate recognition. Phosphorylated at Tyr-323 by ZAP70 in an alternative activation pathway in response to TCR signaling in T-cells. This alternative pathway is inhibited by GADD45A. Inhibited by dual specificity phosphatases, such as DUSP1, DUSP10, and DUSP16. Specifically inhibited by the binding of pyridinyl-imidazole compounds, which are cytokine-suppressive anti-inflammatory drugs (CSAID). SB203580 is an inhibitor of MAPK14. Serine/threonine kinase which acts as an essential component of the MAP kinase signal transduction pathway. MAPK14 is one of the four p38 MAPKs which play an important role in the cascades of cellular responses evoked by extracellular stimuli such as pro-inflammatory cytokines or physical stress leading to direct activation of transcription factors. Accordingly, p38 MAPKs phosphorylate a broad range of proteins and it has been estimated that they may have approximately 200 to 300 substrates each. Some of the targets are downstream kinases which are activated through phosphorylation and further phosphorylate additional targets. RPS6KA5/MSK1 and RPS6KA4/MSK2 can directly phosphorylate and activate transcription factors such as CREB1, ATF1, the NF-kappa-B isoform RELA/NFKB3, STAT1 and STAT3, but can also phosphorylate histone H3 and the nucleosomal protein HMGN1. RPS6KA5/MSK1 and RPS6KA4/MSK2 play important roles in the rapid induction of immediate-early genes in response to stress or mitogenic stimuli, either by inducing chromatin remodeling or by recruiting the transcription machinery. On the other hand, two other kinase targets, MAPKAPK2/MK2 and MAPKAPK3/MK3, participate in the control of gene expression mostly at the post-transcriptional level, by phosphorylating ZFP36 (tristetraprolin) and ELAVL1, and by regulating EEF2K, which is important for the elongation of mRNA during translation. MKNK1/MNK1 and MKNK2/MNK2, two other kinases activated by p38 MAPKs, regulate protein synthesis by phosphorylating the initiation factor EIF4E2. MAPK14 also interacts with casein kinase II, leading to its activation through autophosphorylation and further phosphorylation of TP53/p53. In the cytoplasm, the p38 MAPK pathway is an important regulator of protein turnover. For example, CFLAR is an inhibitor of TNF-induced apoptosis whose proteasome-mediated degradation is regulated by p38 MAPK phosphorylation. In a similar way, MAPK14 phosphorylates the ubiquitin ligase SIAH2, regulating its activity towards EGLN3. MAPK14 may also inhibit the lysosomal degradation pathway of autophagy by interfering with the intracellular trafficking of the transmembrane protein ATG9. Another function of MAPK14 is to regulate the endocytosis of membrane receptors by different mechanisms that impinge on the small GTPase RAB5A. In addition, clathrin-mediated EGFR internalization induced by inflammatory cytokines and UV irradiation depends on MAPK14-mediated phosphorylation of EGFR itself as well as of RAB5A effectors. Ectodomain shedding of transmembrane proteins is regulated by p38 MAPKs as well. In response to inflammatory stimuli, p38 MAPKs phosphorylate the membrane-associated metalloprotease ADAM17. Such phosphorylation is required for ADAM17-mediated ectodomain shedding of TGF-alpha family ligands, which results in the activation of EGFR signaling and cell proliferation. Another p38 MAPK substrate is FGFR1. FGFR1 can be translocated from the extracellular space into the cytosol and nucleus of target cells, and regulates processes such as rRNA synthesis and cell growth. FGFR1 translocation requires p38 MAPK activation. In the nucleus, many transcription factors are phosphorylated and activated by p38 MAPKs in response to different stimuli. Classical examples include ATF1, ATF2, ATF6, ELK1, PTPRH, DDIT3, TP53/p53 and MEF2C and MEF2A. The p38 MAPKs are emerging as important modulators of gene expression by regulating chromatin modifiers and remodelers. The promoters of several genes involved in the inflammatory response, such as IL6, IL8 and IL12B, display a p38 MAPK-dependent enrichment of histone H3 phosphorylation on 'Ser-10' (H3S10ph) in LPS-stimulated myeloid cells. This phosphorylation enhances the accessibility of the cryptic NF-kappa-B-binding sites marking promoters for increased NF-kappa-B recruitment. Phosphorylates CDC25B and CDC25C which is required for binding to 14-3-3 proteins and leads to initiation of a G2 delay after ultraviolet radiation. Phosphorylates TIAR following DNA damage, releasing TIAR from GADD45A mRNA and preventing mRNA degradation. The p38 MAPKs may also have kinase-independent roles, which are thought to be due to the binding to targets in the absence of phosphorylation. Protein O-Glc-N-acylation catalyzed by the OGT is regulated by MAPK14, and, although OGT does not seem to be phosphorylated by MAPK14, their interaction increases upon MAPK14 activation induced by glucose deprivation. This interaction may regulate OGT activity by recruiting it to specific targets such as neurofilament H, stimulating its O-Glc-N-acylation. Required in mid-fetal development for the growth of embryo-derived blood vessels in the labyrinth layer of the placenta. Also plays an essential role in developmental and stress-induced erythropoiesis, through regulation of EPO gene expression. Phosphorylates S100A9 at 'Thr-113'. The polypeptide is Mitogen-activated protein kinase 14 (Pan troglodytes (Chimpanzee)).